The following is an 852-amino-acid chain: Patatin-like phospholipase domain-containing protein CaO19.1504 (852 aa).

A compositionally biased stretch (low complexity) spans Ala41–Asp52. The disordered stretch occupies residues Ala41 to Ser184. Residues Ile75 to Tyr95 show a composition bias toward polar residues. The segment covering Ser101–Thr110 has biased composition (low complexity). Over residues Asp113–Asp122 the composition is skewed to acidic residues. Composition is skewed to low complexity over residues Ser129–Ser142 and Gly158–Ser171. A helical transmembrane segment spans residues Trp207–Ile227. The PNPLA domain maps to Leu396 to Asn588. Residues Gly427 to Gly431 carry the GXSXG motif. Ser429 serves as the catalytic Nucleophile. The active-site Proton acceptor is the Asp575. Residues Lys800–Thr840 are disordered. The segment covering Glu805–Leu833 has biased composition (acidic residues).

It belongs to the PLPL family.

The protein resides in the membrane. Functionally, probable lipid hydrolase. The sequence is that of Patatin-like phospholipase domain-containing protein CaO19.1504 from Candida albicans (strain SC5314 / ATCC MYA-2876) (Yeast).